We begin with the raw amino-acid sequence, 115 residues long: Superoxide reductase (115 aa).

Residues E14, H16, H41, H47, C102, and H105 each coordinate Fe cation.

Belongs to the desulfoferrodoxin family. As to quaternary structure, homotetramer. Fe cation is required as a cofactor.

It carries out the reaction reduced [rubredoxin] + superoxide + 2 H(+) = oxidized [rubredoxin] + H2O2. Functionally, uses electrons from reduced NADP, by way of rubredoxin and an oxidoreductase, to catalyze the reduction of superoxide to hydrogen peroxide. This is Superoxide reductase (sorA) from Thermococcus kodakarensis (strain ATCC BAA-918 / JCM 12380 / KOD1) (Pyrococcus kodakaraensis (strain KOD1)).